A 163-amino-acid polypeptide reads, in one-letter code: 3-dehydroquinate dehydratase (163 aa).

Residue Y28 is the Proton acceptor of the active site. Residues N80, H86, and D93 each contribute to the substrate site. The Proton donor role is filled by H106. Residues 107-108 (IS) and R117 each bind substrate.

It belongs to the type-II 3-dehydroquinase family. As to quaternary structure, homododecamer.

It carries out the reaction 3-dehydroquinate = 3-dehydroshikimate + H2O. Its pathway is metabolic intermediate biosynthesis; chorismate biosynthesis; chorismate from D-erythrose 4-phosphate and phosphoenolpyruvate: step 3/7. Its function is as follows. Catalyzes a trans-dehydration via an enolate intermediate. The protein is 3-dehydroquinate dehydratase of Bradyrhizobium sp. (strain BTAi1 / ATCC BAA-1182).